Here is a 379-residue protein sequence, read N- to C-terminus: MAKRDYYEILGVSKTAEEREIKKAYKRLAMKYHPDRNQGDKEAEAKFKEIKEAYEVLTDAQKRAAYDQYGHAAFEQGGMGGGFGGGFNGGADFSDIFGDVFGDIFGGGRGRQRAARGADLRYNMDLTLEEAVRGVTKEIRIPTLEECDVCHGSGAKAGTQPQTCPTCHGSGQVQMRQGFFAVQQTCPHCQGRGTLIKDPCHKCHGHGRVEKSKTLSVKIPAGVDTGDRIRLAGEGEAGEHGAPAGDLYVQVQVKQHPIFEREGNNLYCEVPINFAMAALGGEIEVPTLDGRVMLKVPSETQTGKLFRMRGKGVKSVRGGAQGDLLCRVVVETPVGLSEKQKQLLKDLQESFGGPTGEKNSPRSKSFFDGVKKFFDDLTR.

A J domain is found at 5–70; it reads DYYEILGVSK…QKRAAYDQYG (66 aa). A CR-type zinc finger spans residues 134–212; that stretch reads GVTKEIRIPT…CHGHGRVEKS (79 aa). Zn(2+)-binding residues include Cys-147, Cys-150, Cys-164, Cys-167, Cys-186, Cys-189, Cys-200, and Cys-203. CXXCXGXG motif repeat units follow at residues 147-154, 164-171, 186-193, and 200-207; these read CDVCHGSG, CPTCHGSG, CPHCQGRG, and CHKCHGHG.

This sequence belongs to the DnaJ family. In terms of assembly, homodimer. Requires Zn(2+) as cofactor.

Its subcellular location is the cytoplasm. Functionally, participates actively in the response to hyperosmotic and heat shock by preventing the aggregation of stress-denatured proteins and by disaggregating proteins, also in an autonomous, DnaK-independent fashion. Unfolded proteins bind initially to DnaJ; upon interaction with the DnaJ-bound protein, DnaK hydrolyzes its bound ATP, resulting in the formation of a stable complex. GrpE releases ADP from DnaK; ATP binding to DnaK triggers the release of the substrate protein, thus completing the reaction cycle. Several rounds of ATP-dependent interactions between DnaJ, DnaK and GrpE are required for fully efficient folding. Also involved, together with DnaK and GrpE, in the DNA replication of plasmids through activation of initiation proteins. In Salmonella agona (strain SL483), this protein is Chaperone protein DnaJ.